The primary structure comprises 366 residues: Dof zinc finger protein DOF1.3 (366 aa).

The disordered stretch occupies residues 22–103 (DPYSSSSHVL…KTTELKKPDK (82 aa)). Low complexity-rich tracts occupy residues 25-45 (SSSSHVLPDSSSSSSSSSLSL) and 56-69 (TDNTSLKLSSNLNN). Composition is skewed to basic and acidic residues over residues 70–83 (ESKETSENSDDQHS) and 91–103 (EEEKTTELKKPDK). A Dof-type zinc finger spans residues 105 to 159 (LPCPRCNSADTKFCYYNNYNVNQPRHFCRKCQRYWTAGGSMRIVPVGSGRRKNKG). 4 residues coordinate Zn(2+): Cys107, Cys110, Cys132, and Cys135.

It localises to the nucleus. Functionally, transcription factor that binds specifically to a 5'-AA[AG]G-3' consensus core sequence. This Arabidopsis thaliana (Mouse-ear cress) protein is Dof zinc finger protein DOF1.3 (DOF1.3).